Consider the following 464-residue polypeptide: Propanal dehydrogenase (CoA-propanoylating) (464 aa).

The segment at 1–18 (MNTSELETLIRTILSEQL) is targets protein to the BMC.

Belongs to the EutE/PduP family. Interacts with BMC shell proteins PduA and PduJ, which target this protein to BMC. Interacts with PduQ, probably via the N-terminus of PduQ. Interacts with PduK, probably with its BMC-containing N-terminus.

It is found in the bacterial microcompartment. The catalysed reaction is propanal + NAD(+) + CoA = propanoyl-CoA + NADH + H(+). Its pathway is polyol metabolism; 1,2-propanediol degradation. A CoA-acylating aldehyde dehydrogenase required for optimal 1,2-propanediol (1,2-PD) degradation. Optimizes growth in the bacterial microcompartment (BMC) dedicated to 1,2-PD degradation by minimizing propionaldehyde toxicity. Directly targeted to the BMC. NAD(+) and NADH are regenerated internally within the Pdu BMC by the PduP and PduQ enzymes, which reduce NAD(+) and oxidize NADH respectively, although there must also be cofactor transport across the BMC. Functionally, the 1,2-PD-specific bacterial microcompartment (BMC) concentrates low levels of 1,2-PD catabolic enzymes, concentrates volatile reaction intermediates thus enhancing pathway flux and keeps the level of toxic, mutagenic propionaldehyde low. The chain is Propanal dehydrogenase (CoA-propanoylating) from Salmonella typhimurium (strain LT2 / SGSC1412 / ATCC 700720).